Reading from the N-terminus, the 494-residue chain is Probable cytosol aminopeptidase (494 aa).

Lys-260 and Asp-265 together coordinate Mn(2+). Lys-272 is an active-site residue. Mn(2+) contacts are provided by Asp-283, Asp-342, and Glu-344. Arg-346 is an active-site residue.

It belongs to the peptidase M17 family. The cofactor is Mn(2+).

The protein resides in the cytoplasm. It carries out the reaction Release of an N-terminal amino acid, Xaa-|-Yaa-, in which Xaa is preferably Leu, but may be other amino acids including Pro although not Arg or Lys, and Yaa may be Pro. Amino acid amides and methyl esters are also readily hydrolyzed, but rates on arylamides are exceedingly low.. The enzyme catalyses Release of an N-terminal amino acid, preferentially leucine, but not glutamic or aspartic acids.. Presumably involved in the processing and regular turnover of intracellular proteins. Catalyzes the removal of unsubstituted N-terminal amino acids from various peptides. The chain is Probable cytosol aminopeptidase from Bacillus cereus (strain ATCC 14579 / DSM 31 / CCUG 7414 / JCM 2152 / NBRC 15305 / NCIMB 9373 / NCTC 2599 / NRRL B-3711).